Here is a 326-residue protein sequence, read N- to C-terminus: Hairy/enhancer-of-split related with YRPW motif-like protein (326 aa).

Residues Met-1–Arg-56 form a disordered region. The interval Gln-42–Ala-111 is transcriptional repression and interaction with NCOR1 and SIN3A. A bHLH domain is found at Ala-43–Leu-98. In terms of domain architecture, Orange spans Phe-116–Leu-153. Disordered regions lie at residues His-223–Thr-260 and Pro-272–Arg-306. Positions Ser-292–Gly-305 are enriched in low complexity.

This sequence belongs to the HEY family. As to quaternary structure, interacts with HES1, HDAC1, NCOR1 and SIN3A. Self-associates. Interacts with GATA4, GATA6, HEY1 and HEY2. Expressed in heart and at lower levels in brain, lung, muscle, ovary and testis.

It localises to the nucleus. Transcriptional repressor which binds preferentially to the canonical E box sequence 5'-CACGTG-3'. Downstream effector of Notch signaling required for cardiovascular development. Specifically required for the Notch-induced endocardial epithelial to mesenchymal transition, which is itself criticial for cardiac valve and septum development. Represses transcription by the cardiac transcriptional activators GATA4 and GATA6. This is Hairy/enhancer-of-split related with YRPW motif-like protein (Heyl) from Mus musculus (Mouse).